The following is a 184-amino-acid chain: Mitochondrial translation release factor in rescue (184 aa).

A mitochondrion-targeting transit peptide spans 1 to 98; the sequence is MSSRSTWALL…HVPSGIVVKC (98 aa). Residues 60-124 are GGQ domain; sequence ESELEEQFVK…LQEKVDVFYN (65 aa). The GGQ motif lies at 74 to 76; the sequence is GGQ. Glutamine 76 carries the N5-methylglutamine modification. Positions 130 to 178 form a coiled coil; it reads VHKEKLEAERRKRERKKRAKETLEKKKLLKELREASQNITEKKADADGI. The segment at 132 to 184 is disordered; the sequence is KEKLEAERRKRERKKRAKETLEKKKLLKELREASQNITEKKADADGIPRGFQE. Positions 149 to 184 are enriched in basic and acidic residues; sequence KETLEKKKLLKELREASQNITEKKADADGIPRGFQE.

The protein belongs to the prokaryotic/mitochondrial release factor family. As to quaternary structure, interacts (via C-terminus) with MTRES1 (via S4 domain). Associates with mitoribosomal S39 large subunit, peptidyl tRNA and nascent chain. Post-translationally, methylation of glutamine in the GGQ triplet by HEMK1.

It is found in the mitochondrion. Functionally, part of a mitoribosome-associated quality control pathway that prevents aberrant translation by responding to interruptions during elongation. As heterodimer with MTRES1, ejects the unfinished nascent chain and peptidyl transfer RNA (tRNA), respectively, from stalled ribosomes. Recruitment of mitoribosome biogenesis factors to these quality control intermediates suggests additional roles for MTRES1 and MTRF during mitoribosome rescue. This Mus musculus (Mouse) protein is Mitochondrial translation release factor in rescue.